A 277-amino-acid polypeptide reads, in one-letter code: Large ribosomal subunit protein uL2 (277 aa).

Residues 219–277 (TVRGSVMNPNDHPHGGGEGKAPVGRKAPSTPWGKPALGLKTRNKKAKSNKLIVRRRNEK) are disordered. Residues 259–277 (TRNKKAKSNKLIVRRRNEK) show a composition bias toward basic residues.

It belongs to the universal ribosomal protein uL2 family. As to quaternary structure, part of the 50S ribosomal subunit. Forms a bridge to the 30S subunit in the 70S ribosome.

In terms of biological role, one of the primary rRNA binding proteins. Required for association of the 30S and 50S subunits to form the 70S ribosome, for tRNA binding and peptide bond formation. It has been suggested to have peptidyltransferase activity; this is somewhat controversial. Makes several contacts with the 16S rRNA in the 70S ribosome. In Streptococcus equi subsp. zooepidemicus (strain MGCS10565), this protein is Large ribosomal subunit protein uL2.